Consider the following 302-residue polypeptide: NAD kinase 2 (302 aa).

Asp-78 serves as the catalytic Proton acceptor. NAD(+)-binding positions include 78–79 (DG), 152–153 (NE), Asp-182, 193–198 (TAYALS), and Ala-217.

It belongs to the NAD kinase family. A divalent metal cation serves as cofactor.

It localises to the cytoplasm. The catalysed reaction is NAD(+) + ATP = ADP + NADP(+) + H(+). Involved in the regulation of the intracellular balance of NAD and NADP, and is a key enzyme in the biosynthesis of NADP. Catalyzes specifically the phosphorylation on 2'-hydroxyl of the adenosine moiety of NAD to yield NADP. The chain is NAD kinase 2 from Prochlorococcus marinus (strain MIT 9313).